A 499-amino-acid chain; its full sequence is Protein adenylyltransferase Fic (499 aa).

Residues Phe-38 to Leu-58 form a helical membrane-spanning segment. 2 TPR repeats span residues Ala-126–His-159 and Pro-160–His-194. An Inhibitory (S/T)XXXE(G/N) motif motif is present at residues Ser-251–Gly-256. ATP is bound by residues Glu-255 and Val-337 to His-340. A Fido domain is found at Ile-306 to Asp-441. His-384 is a catalytic residue. Residues Asp-388 to Arg-395, Tyr-420 to Tyr-421, and Asn-428 each bind ATP.

This sequence belongs to the fic family. Homodimer.

It localises to the membrane. The catalysed reaction is L-tyrosyl-[protein] + ATP = O-(5'-adenylyl)-L-tyrosyl-[protein] + diphosphate. It catalyses the reaction L-threonyl-[protein] + ATP = 3-O-(5'-adenylyl)-L-threonyl-[protein] + diphosphate. The enzyme catalyses 3-O-(5'-adenylyl)-L-threonyl-[protein] + H2O = L-threonyl-[protein] + AMP + H(+). With respect to regulation, the side chain of Glu-255 determines which of the two opposing activities (AMPylase or de-AMPylase) will take place. In response to endoplasmic reticulum stress, mediates de-AMPylase activity. Adenylyltransferase activity is inhibited by the inhibitory helix present at the N-terminus: Glu-255 binds ATP and competes with ATP-binding at Arg-395, thereby preventing adenylyltransferase activity. In unstressed cells, disengagement of Glu-255 promotes adenylyltransferase activity. Activation dissociates ATP-binding from Glu-255, allowing ordered binding of the entire ATP moiety with the alpha-phosphate in an orientation that is productive for accepting an incoming target hydroxyl side chain. Functionally, protein that can both mediate the addition of adenosine 5'-monophosphate (AMP) to specific residues of target proteins (AMPylation), and the removal of the same modification from target proteins (de-AMPylation), depending on the context. The side chain of Glu-255 determines which of the two opposing activities (AMPylase or de-AMPylase) will take place. Acts as a key regulator of the unfolded protein response (UPR) by mediating AMPylation or de-AMPylation of Hsc70-3/BiP. In unstressed cells, acts as an adenylyltransferase by mediating AMPylation of Hsc70-3/BiP at 'Thr-518', thereby inactivating it. In response to endoplasmic reticulum stress, acts as a phosphodiesterase by mediating removal of ATP (de-AMPylation) from Hsc70-3/BiP at 'Thr-518', leading to restore HSPA5/BiP activity. In Aedes aegypti (Yellowfever mosquito), this protein is Protein adenylyltransferase Fic.